Here is a 321-residue protein sequence, read N- to C-terminus: L-carnitine dehydrogenase (321 aa).

14-19 (GSGVIG) is a binding site for NAD(+).

It belongs to the 3-hydroxyacyl-CoA dehydrogenase family. L-carnitine dehydrogenase subfamily. In terms of assembly, homodimer.

The protein localises to the cytoplasm. It catalyses the reaction carnitine + NAD(+) = 3-dehydrocarnitine + NADH + H(+). It participates in amine and polyamine metabolism; carnitine metabolism. With respect to regulation, analogs of L-carnitine such as D-carnitine, glycine betaine and choline, are competitive inhibitors of L-carnitine oxidation. Its function is as follows. Catalyzes the NAD(+)-dependent oxidation of L-carnitine to 3-dehydrocarnitine. Is specific for L-carnitine and NAD(+) as substrates. D,L-3-hydroxybutyrate, L-lactate, ethanol, L-malate and D,L-isocitrate are not substrates. Is involved in a L-carnitine degradation pathway that allows P.aeruginosa to grow on L-carnitine as the sole source of carbon and nitrogen. The sequence is that of L-carnitine dehydrogenase from Pseudomonas aeruginosa (strain ATCC 15692 / DSM 22644 / CIP 104116 / JCM 14847 / LMG 12228 / 1C / PRS 101 / PAO1).